The following is a 385-amino-acid chain: MHVMYIAGVMSGTSLDGIDVALVRIEGSGVESKVELIHFTTVPFCNDIKSEIQQALSIENSNVQLICSLNFKLGLCFANAVKEVCKEANFSLEQLDLIGSHGQTIYHQPKQDGNRIPSTLQIGEPAVIAYETNTTVISNFRTMDMAAGGQGAPLVPYSEVILYRDPSKNRLLQNIGGISNVTVIPNQQSDQNVIAFDTGPGNMIIDEVCQRLFQLPYDQNGEIAKQGRVVNEILTYCMSHQFLKMNPPKSTGREQFGEKFVSELLKRFEKHSKENILTTVTMFTANSIVHHYKKFILPYYEIDEVILGGGGSYNSTLVEMLRNGLKDENCAIFIQEDIGYSSEAKEAIAFAILANETHHCNPSNVPSATGAKQSVVLGNITFPPV.

An ATP-binding site is contributed by 12–19; that stretch reads GTSLDGID.

The protein belongs to the anhydro-N-acetylmuramic acid kinase family.

The catalysed reaction is 1,6-anhydro-N-acetyl-beta-muramate + ATP + H2O = N-acetyl-D-muramate 6-phosphate + ADP + H(+). It participates in amino-sugar metabolism; 1,6-anhydro-N-acetylmuramate degradation. It functions in the pathway cell wall biogenesis; peptidoglycan recycling. Its function is as follows. Catalyzes the specific phosphorylation of 1,6-anhydro-N-acetylmuramic acid (anhMurNAc) with the simultaneous cleavage of the 1,6-anhydro ring, generating MurNAc-6-P. Is required for the utilization of anhMurNAc either imported from the medium or derived from its own cell wall murein, and thus plays a role in cell wall recycling. The protein is Anhydro-N-acetylmuramic acid kinase of Bacillus thuringiensis (strain Al Hakam).